We begin with the raw amino-acid sequence, 440 residues long: Serine/threonine-protein kinase STK11 (440 aa).

Residues 49–309 (YLMGDLLGEG…IQQIRQHNWF (261 aa)) form the Protein kinase domain. Residues 55–63 (LGEGSYGKV) and Lys78 each bind ATP. The active-site Proton acceptor is Asp176. Thr336 and Thr365 each carry phosphothreonine; by autocatalysis. The tract at residues 370–440 (VPGQVPEEEA…IRKLSTCKQQ (71 aa)) is disordered. Residues 430–440 (KIRKLSTCKQQ) are compositionally biased toward basic residues. Ser435 bears the Phosphoserine; by PKA mark.

It belongs to the protein kinase superfamily. CAMK Ser/Thr protein kinase family. LKB1 subfamily. In terms of assembly, catalytic component of a trimeric complex composed of STK11/LKB1, STRAD (STRADA or STRADB) and CAB39/MO25 (CAB39/MO25alpha or CAB39L/MO25beta). Mg(2+) serves as cofactor. Mn(2+) is required as a cofactor. As to expression, ubiquitously expressed in all tissues tested. High levels were observed in duodenum and skeletal muscle, lower levels in liver and pancreas.

Its subcellular location is the nucleus. It is found in the cytoplasm. The catalysed reaction is L-seryl-[protein] + ATP = O-phospho-L-seryl-[protein] + ADP + H(+). It catalyses the reaction L-threonyl-[protein] + ATP = O-phospho-L-threonyl-[protein] + ADP + H(+). Tumor suppressor serine/threonine-protein kinase that controls the activity of AMP-activated protein kinase (AMPK) family members, thereby playing a role in various processes such as cell metabolism, cell polarity, apoptosis and DNA damage response. Acts by phosphorylating the T-loop of AMPK family proteins, leading to promote their activity. The sequence is that of Serine/threonine-protein kinase STK11 from Gallus gallus (Chicken).